A 443-amino-acid polypeptide reads, in one-letter code: 5-methylthioadenosine/S-adenosylhomocysteine deaminase (443 aa).

Residues His-74 and His-76 each contribute to the Zn(2+) site. Positions 103 and 196 each coordinate substrate. His-223 provides a ligand contact to Zn(2+). The substrate site is built by Glu-226 and Asp-311. Asp-311 is a Zn(2+) binding site.

Belongs to the metallo-dependent hydrolases superfamily. MTA/SAH deaminase family. The cofactor is Zn(2+).

It carries out the reaction S-adenosyl-L-homocysteine + H2O + H(+) = S-inosyl-L-homocysteine + NH4(+). The enzyme catalyses S-methyl-5'-thioadenosine + H2O + H(+) = S-methyl-5'-thioinosine + NH4(+). Its function is as follows. Catalyzes the deamination of 5-methylthioadenosine and S-adenosyl-L-homocysteine into 5-methylthioinosine and S-inosyl-L-homocysteine, respectively. Is also able to deaminate adenosine. The polypeptide is 5-methylthioadenosine/S-adenosylhomocysteine deaminase (Haloquadratum walsbyi (strain DSM 16790 / HBSQ001)).